A 339-amino-acid polypeptide reads, in one-letter code: Biotin synthase (339 aa).

The Radical SAM core domain occupies 47 to 276 (FYGKKVKLNM…SKEIRISGGR (230 aa)). [4Fe-4S] cluster contacts are provided by Cys-65, Cys-69, and Cys-72. Residues Cys-109, Cys-141, Cys-201, and Arg-271 each coordinate [2Fe-2S] cluster.

It belongs to the radical SAM superfamily. Biotin synthase family. As to quaternary structure, homodimer. It depends on [4Fe-4S] cluster as a cofactor. Requires [2Fe-2S] cluster as cofactor.

It carries out the reaction (4R,5S)-dethiobiotin + (sulfur carrier)-SH + 2 reduced [2Fe-2S]-[ferredoxin] + 2 S-adenosyl-L-methionine = (sulfur carrier)-H + biotin + 2 5'-deoxyadenosine + 2 L-methionine + 2 oxidized [2Fe-2S]-[ferredoxin]. The protein operates within cofactor biosynthesis; biotin biosynthesis; biotin from 7,8-diaminononanoate: step 2/2. Catalyzes the conversion of dethiobiotin (DTB) to biotin by the insertion of a sulfur atom into dethiobiotin via a radical-based mechanism. The chain is Biotin synthase from Bacillus velezensis (strain DSM 23117 / BGSC 10A6 / LMG 26770 / FZB42) (Bacillus amyloliquefaciens subsp. plantarum).